The following is a 425-amino-acid chain: Inner membrane protein YqcE (425 aa).

The Cytoplasmic portion of the chain corresponds to 1 to 8; it reads MQHNSYRR. Residues 9 to 29 form a helical membrane-spanning segment; that stretch reads WITLAIISFSGGVSFDLAYLR. At 30 to 48 the chain is on the periplasmic side; that stretch reads YIYQIPMAKFMGFSNTEIG. A helical transmembrane segment spans residues 49 to 69; sequence LIMSTFGIAAIILYAPSGVIA. Topologically, residues 70-75 are cytoplasmic; it reads DKFSHR. A run of 2 helical transmembrane segments spans residues 76–96 and 97–117; these read KMIT…ATYP and PLWV…LMLW. At 118–138 the chain is on the cytoplasmic side; sequence SVSIKAASLLGDHSEQGKIMG. A helical membrane pass occupies residues 139–159; the sequence is WMEGLRGVGVMSLAVFTMWVF. Residues 160 to 171 lie on the Periplasmic side of the membrane; that stretch reads SRFAPDDSTSLK. A helical membrane pass occupies residues 172-192; that stretch reads TVIIIYSVVYILLGILCWFFV. The Cytoplasmic portion of the chain corresponds to 193–219; sequence SDNNNLRSANNEEKQSFQLSDILAVLR. A helical transmembrane segment spans residues 220–240; the sequence is ISTTWYCSMVIFGVFTIYAIL. Residues 241–259 lie on the Periplasmic side of the membrane; sequence SYSTNYLTEMYGMSLVAAS. A helical membrane pass occupies residues 260–280; that stretch reads YMGIVINKIFRALCGPLGGII. At 281 to 291 the chain is on the cytoplasmic side; sequence TTYSKVKSPTR. Residues 292–312 traverse the membrane as a helical segment; it reads VIQILSVLGLLTLTALLVTNS. A topological domain (periplasmic) is located at residue asparagine 313. Residues 314 to 334 traverse the membrane as a helical segment; it reads PQSVAMGIGLILLLGFTCYAS. Topologically, residues 335 to 354 are cytoplasmic; the sequence is RGLYWACPGEARTPSYIMGT. A helical transmembrane segment spans residues 355 to 375; sequence TVGICSVIGFLPDVFVYPIIG. Topologically, residues 376 to 388 are periplasmic; that stretch reads HWQDTLPAAEAYR. Residues 389–409 traverse the membrane as a helical segment; that stretch reads NMWLMGMAALGMVIVFTFLLF. At 410-425 the chain is on the cytoplasmic side; it reads QKIRTADSAPAMASSK.

It to E.coli YihN.

Its subcellular location is the cell inner membrane. This chain is Inner membrane protein YqcE (yqcE), found in Escherichia coli (strain K12).